The chain runs to 184 residues: Elongation factor P (184 aa).

This sequence belongs to the elongation factor P family.

It is found in the cytoplasm. It participates in protein biosynthesis; polypeptide chain elongation. Functionally, involved in peptide bond synthesis. Stimulates efficient translation and peptide-bond synthesis on native or reconstituted 70S ribosomes in vitro. Probably functions indirectly by altering the affinity of the ribosome for aminoacyl-tRNA, thus increasing their reactivity as acceptors for peptidyl transferase. This Acidovorax ebreus (strain TPSY) (Diaphorobacter sp. (strain TPSY)) protein is Elongation factor P.